A 471-amino-acid chain; its full sequence is Phosphatidate cytidylyltransferase 3 (471 aa).

Positions 1–72 (MAMEKDLSPN…HRRRSSENLA (72 aa)) are disordered. The span at 21–35 (SYPTTPTSRMNTNNQ) shows a compositional bias: polar residues. A run of 8 helical transmembrane segments spans residues 97-116 (WIRT…IIYM), 120-139 (YIWA…LFFL), 149-169 (LPGF…FVYG), 196-216 (YQMV…ILTL), 228-250 (YAWT…ANIF), 255-277 (WFLL…GFYF), 293-313 (GFIG…NVLG), and 368-388 (FSLG…ASGF).

It belongs to the CDS family. The cofactor is Mg(2+).

It is found in the membrane. The catalysed reaction is a 1,2-diacyl-sn-glycero-3-phosphate + CTP + H(+) = a CDP-1,2-diacyl-sn-glycerol + diphosphate. It functions in the pathway phospholipid metabolism; CDP-diacylglycerol biosynthesis; CDP-diacylglycerol from sn-glycerol 3-phosphate: step 3/3. Functionally, may be involved in the synthesis of minor phospholipids and in modulation of IP3-mediated signal transduction. The sequence is that of Phosphatidate cytidylyltransferase 3 from Arabidopsis thaliana (Mouse-ear cress).